A 150-amino-acid polypeptide reads, in one-letter code: 3-dehydroquinate dehydratase (150 aa).

Tyrosine 22 acts as the Proton acceptor in catalysis. Substrate-binding residues include asparagine 73, histidine 79, and aspartate 86. Catalysis depends on histidine 99, which acts as the Proton donor. Residues 100–101 (LT) and arginine 110 each bind substrate.

It belongs to the type-II 3-dehydroquinase family. In terms of assembly, homododecamer.

It carries out the reaction 3-dehydroquinate = 3-dehydroshikimate + H2O. It participates in metabolic intermediate biosynthesis; chorismate biosynthesis; chorismate from D-erythrose 4-phosphate and phosphoenolpyruvate: step 3/7. Its function is as follows. Catalyzes a trans-dehydration via an enolate intermediate. The sequence is that of 3-dehydroquinate dehydratase from Desulforudis audaxviator (strain MP104C).